The following is a 271-amino-acid chain: Ribonuclease HII (271 aa).

The RNase H type-2 domain occupies 84 to 271 (VLIAGVDEVG…HRMSFLSNYI (188 aa)). Asp90, Glu91, and Asp187 together coordinate a divalent metal cation.

Belongs to the RNase HII family. It depends on Mn(2+) as a cofactor. Requires Mg(2+) as cofactor.

It is found in the cytoplasm. The enzyme catalyses Endonucleolytic cleavage to 5'-phosphomonoester.. In terms of biological role, endonuclease that specifically degrades the RNA of RNA-DNA hybrids. The protein is Ribonuclease HII of Clostridium tetani (strain Massachusetts / E88).